A 185-amino-acid polypeptide reads, in one-letter code: Ribosome-recycling factor (185 aa).

It belongs to the RRF family.

The protein resides in the cytoplasm. In terms of biological role, responsible for the release of ribosomes from messenger RNA at the termination of protein biosynthesis. May increase the efficiency of translation by recycling ribosomes from one round of translation to another. The sequence is that of Ribosome-recycling factor from Corynebacterium efficiens (strain DSM 44549 / YS-314 / AJ 12310 / JCM 11189 / NBRC 100395).